Reading from the N-terminus, the 115-residue chain is Cholecystokinin (115 aa).

Positions 1–20 (MNSGVCLCVLMAVLAAGALT) are cleaved as a signal peptide. A propeptide spanning residues 21-44 (QPVPPADPAGSGLQRAEEAPRRQL) is cleaved from the precursor. Residues 23 to 52 (VPPADPAGSGLQRAEEAPRRQLRVSQRTDG) are disordered. O-linked (Xyl...) (chondroitin sulfate) serine glycosylation is present at Ser31. A Sulfotyrosine modification is found at Tyr97. Phe103 carries the phenylalanine amide modification. Positions 107-115 (SAEEYEYPS) are excised as a propeptide. Residues Tyr111 and Tyr113 each carry the sulfotyrosine modification.

Belongs to the gastrin/cholecystokinin family. As to quaternary structure, binds to CCK-A receptors in the pancreas and CCK-B receptors in the brain. Post-translationally, the precursor is cleaved by proteases to produce a number of active cholecystokinins. In terms of processing, the precursor is cleaved by ACE, which removes the Gly-Arg-Arg peptide at the C-terminus, leading to mature hormone. Detected in cerebrospinal fluid and urine (at protein level).

It localises to the secreted. In terms of biological role, this peptide hormone induces gall bladder contraction and the release of pancreatic enzymes in the gut. Its function in the brain is not clear. Binding to CCK-A receptors stimulates amylase release from the pancreas, binding to CCK-B receptors stimulates gastric acid secretion. The polypeptide is Cholecystokinin (CCK) (Homo sapiens (Human)).